The chain runs to 148 residues: Small ribosomal subunit protein bS6 (148 aa).

The segment at 97-148 is disordered; that stretch reads EEGPSAMLQRRDDRERGDRGDRGPRRDFDDRGPRRPREDDRPRRSREDEGDE.

The protein belongs to the bacterial ribosomal protein bS6 family.

Its function is as follows. Binds together with bS18 to 16S ribosomal RNA. The chain is Small ribosomal subunit protein bS6 from Chelativorans sp. (strain BNC1).